A 228-amino-acid polypeptide reads, in one-letter code: Fluoride-specific ion channel FluC (228 aa).

7 helical membrane-spanning segments follow: residues 3–23, 37–57, 72–92, 101–121, 141–161, 172–192, and 202–222; these read LSLF…FWVS, GTLF…VMMI, VGFL…LALF, ALNV…GAVL, IFGA…LAFA, LVLV…LVVT, and LWGA…LGLV. Residues Gly-76 and Thr-79 each contribute to the Na(+) site.

The protein belongs to the fluoride channel Fluc/FEX (TC 1.A.43) family.

It localises to the cell inner membrane. The enzyme catalyses fluoride(in) = fluoride(out). Its activity is regulated as follows. Na(+) is not transported, but it plays an essential structural role and its presence is essential for fluoride channel function. In terms of biological role, fluoride-specific ion channel. Important for reducing fluoride concentration in the cell, thus reducing its toxicity. The sequence is that of Fluoride-specific ion channel FluC from Methylococcus capsulatus (strain ATCC 33009 / NCIMB 11132 / Bath).